The following is a 202-amino-acid chain: ATP-dependent Clp protease proteolytic subunit (202 aa).

Serine 106 acts as the Nucleophile in catalysis. The active site involves histidine 131.

This sequence belongs to the peptidase S14 family. In terms of assembly, fourteen ClpP subunits assemble into 2 heptameric rings which stack back to back to give a disk-like structure with a central cavity, resembling the structure of eukaryotic proteasomes.

It is found in the cytoplasm. It carries out the reaction Hydrolysis of proteins to small peptides in the presence of ATP and magnesium. alpha-casein is the usual test substrate. In the absence of ATP, only oligopeptides shorter than five residues are hydrolyzed (such as succinyl-Leu-Tyr-|-NHMec, and Leu-Tyr-Leu-|-Tyr-Trp, in which cleavage of the -Tyr-|-Leu- and -Tyr-|-Trp bonds also occurs).. Its function is as follows. Cleaves peptides in various proteins in a process that requires ATP hydrolysis. Has a chymotrypsin-like activity. Plays a major role in the degradation of misfolded proteins. The polypeptide is ATP-dependent Clp protease proteolytic subunit (Shewanella sp. (strain ANA-3)).